A 210-amino-acid polypeptide reads, in one-letter code: Superoxide dismutase [Mn], mitochondrial (210 aa).

Positions 29, 77, 163, and 167 each coordinate Mn(2+).

This sequence belongs to the iron/manganese superoxide dismutase family. Homotetramer. It depends on Mn(2+) as a cofactor.

It is found in the mitochondrion matrix. It catalyses the reaction 2 superoxide + 2 H(+) = H2O2 + O2. In terms of biological role, destroys superoxide anion radicals which are normally produced within the cells and which are toxic to biological systems. This is Superoxide dismutase [Mn], mitochondrial (sodB) from Aspergillus fumigatus (strain ATCC MYA-4609 / CBS 101355 / FGSC A1100 / Af293) (Neosartorya fumigata).